Consider the following 473-residue polypeptide: Glutamate--tRNA ligase 2 (473 aa).

Positions 11–21 match the 'HIGH' region motif; it reads PSPTGYLHIGG. The segment covering 113-133 has biased composition (basic and acidic residues); it reads KARAEGRPPRYDGRWRDRDPS. The segment at 113-136 is disordered; that stretch reads KARAEGRPPRYDGRWRDRDPSEAP. Residues 240-244 carry the 'KMSKS' region motif; it reads KLSKR. Lysine 243 is a binding site for ATP.

Belongs to the class-I aminoacyl-tRNA synthetase family. Glutamate--tRNA ligase type 1 subfamily. As to quaternary structure, monomer.

It localises to the cytoplasm. The enzyme catalyses tRNA(Glu) + L-glutamate + ATP = L-glutamyl-tRNA(Glu) + AMP + diphosphate. Its function is as follows. Catalyzes the attachment of glutamate to tRNA(Glu) in a two-step reaction: glutamate is first activated by ATP to form Glu-AMP and then transferred to the acceptor end of tRNA(Glu). The protein is Glutamate--tRNA ligase 2 of Brucella canis (strain ATCC 23365 / NCTC 10854 / RM-666).